A 142-amino-acid polypeptide reads, in one-letter code: Hemoglobin subunit alpha (142 aa).

Serine 1 carries the N-acetylserine modification. Positions 1-142 (SLSDKDKADV…LALALGQKYR (142 aa)) constitute a Globin domain. Histidine 58 provides a ligand contact to O2. Residue histidine 88 coordinates heme b.

Belongs to the globin family. Heterotetramer of two alpha chains and two beta chains. As to expression, red blood cells.

Involved in oxygen transport from gills to the various peripheral tissues. The chain is Hemoglobin subunit alpha (hba) from Catostomus clarkii (Desert sucker).